The primary structure comprises 419 residues: MPCILYMDDTSCLIDLPTSLQFNKHILPTRTKPVVKPYLLPEKSTSDYENSGKGTVGQVLQSLQRVRRALQLRSLDDNQSTDKSHHVQFQDIVYRSNTSASEIHFQAENAPLVQWYSDIFKVLVKAPVIQFEDQCLQWLKMLNTIPPSYSFITIKSKDTVELGLEEIYQQCVQNDGASAIKLKLKGSKVITESSETNCRDSIYYIPARSSFIMGDVEKTAQILLEAIDGHLEKPKCIIIDPPWPNKSVARSSVYKVNRNLGYLKALPIQESLSKTGVVAVWCTNKEKYVNFVKKVLFKKWNLTLVSTWTWLKITAFGEPLFDVYSNMRKPWEQLLIGVTSEYTSVYSDKIPPTFTIIGIPDYHSRKPSLKPFISRWFNCSANESLPVLEIFGRSLTPNWITWGREPLLFMHELYWSSDN.

Belongs to the MT-A70-like family.

It localises to the cytoplasm. This is an uncharacterized protein from Schizosaccharomyces pombe (strain 972 / ATCC 24843) (Fission yeast).